The sequence spans 282 residues: Bifunctional protein FolD (282 aa).

NADP(+) contacts are provided by residues 164 to 166 (GRS) and S189.

Belongs to the tetrahydrofolate dehydrogenase/cyclohydrolase family. Homodimer.

It catalyses the reaction (6R)-5,10-methylene-5,6,7,8-tetrahydrofolate + NADP(+) = (6R)-5,10-methenyltetrahydrofolate + NADPH. The catalysed reaction is (6R)-5,10-methenyltetrahydrofolate + H2O = (6R)-10-formyltetrahydrofolate + H(+). It participates in one-carbon metabolism; tetrahydrofolate interconversion. In terms of biological role, catalyzes the oxidation of 5,10-methylenetetrahydrofolate to 5,10-methenyltetrahydrofolate and then the hydrolysis of 5,10-methenyltetrahydrofolate to 10-formyltetrahydrofolate. This is Bifunctional protein FolD from Lactobacillus gasseri (strain ATCC 33323 / DSM 20243 / BCRC 14619 / CIP 102991 / JCM 1131 / KCTC 3163 / NCIMB 11718 / NCTC 13722 / AM63).